A 925-amino-acid polypeptide reads, in one-letter code: MLSSMNWVLLSFIIVLGGGLLLSEGASSSRPPVIKVGAIFGLNTMYGETANIAFKAAEEDVNSDPSFLGGSKLRILMNDAKRSGFLSIMGALQFMETDVVAIIGPQTSIMAHVLSHLANELTVPMLSFTALDPTLSPLQFPFFVQTAPSDLFLMRAIAEMITYYGWSDVVALYNDDDNSRNGVTALGDELEERRCKISYKAVLPLDVVITSPVEIIEELIKIRGMESRVIVVNTFPNTGKMIFKEAERLGMMEKGYVWIATTWLSSVLDSNLPLDTKLVNGVLTLRLHTPDSRKKRDFAARWKNKLSNNKTIGLNVYGLYAYDTVWIIARAVKTLLEAGGNLSFSNDAKLGSLKGEALNLSALSRFDQGSQLLDYIVHTKMSGLTGPVQFHPDRSMLQPSYDIINLVDDRVHQIGYWSNYSGLSIVPPESFYSKPPNRSSSNQHLNSVTWPGGTSVTPRGWIFRNNGRRLRIGVPDRASFKDFVSRVNGSSNKVQGYCIDVFEAAVKLLSYPVPHEFIFFGDGLTNPNYNELVNKVTTGVDFDAVVGDIAIVTKRTRIVDFTQPYIESGLVVVAPVTRLNENPWAFLRPFTLPMWAVTASFFVIVGAAIWILEHRINDEFRGPPRRQIITILWFTFSTMFFSHRETTVSTLGRMVLLIWLFVVLIITSSYTASLTSILTVQQLNSPIKGVDTLISSTGRIGFQVGSFAENYMTDELNIASSRLVPLASPEEYANALQNGTVAAIVDERPYIDLFLSDYCKFAIRGQEFTRCGWGFAFPRDSPLAVDMSTAILGLSETGELQKIHDRWLSKSNCSSPHGSQSGDSEQLNVHSFWGMFLVVGIACLVALFIHFFKIIRDFCKDTPEVVVEEAIPSPKSSRLTKLQTFLAFVDEKEEETKRRLKRKRNNDHSMNANSIISRTASRRPI.

The N-terminal stretch at 1-25 (MLSSMNWVLLSFIIVLGGGLLLSEG) is a signal peptide. The Extracellular segment spans residues 26 to 591 (ASSSRPPVIK…NPWAFLRPFT (566 aa)). 6 N-linked (GlcNAc...) asparagine glycosylation sites follow: Asn309, Asn341, Asn359, Asn419, Asn437, and Asn488. Residues 592 to 612 (LPMWAVTASFFVIVGAAIWIL) form a helical membrane-spanning segment. At 613-621 (EHRINDEFR) the chain is on the cytoplasmic side. The chain crosses the membrane as a helical span at residues 622–642 (GPPRRQIITILWFTFSTMFFS). The Cytoplasmic segment spans residues 643 to 653 (HRETTVSTLGR). Residues 654–674 (MVLLIWLFVVLIITSSYTASL) form a helical membrane-spanning segment. The Extracellular segment spans residues 675–831 (TSILTVQQLN…GDSEQLNVHS (157 aa)). 2 N-linked (GlcNAc...) asparagine glycosylation sites follow: Asn738 and Asn812. The helical transmembrane segment at 832 to 852 (FWGMFLVVGIACLVALFIHFF) threads the bilayer. Topologically, residues 853-925 (KIIRDFCKDT…ISRTASRRPI (73 aa)) are cytoplasmic. The interval 897 to 925 (KRRLKRKRNNDHSMNANSIISRTASRRPI) is disordered. Residues 908–919 (HSMNANSIISRT) show a composition bias toward polar residues.

The protein belongs to the glutamate-gated ion channel (TC 1.A.10.1) family. May form heteromers. Expressed predominantly in roots. Firt detected in the vascular tissues of the cotyledons, and later in the vasculature of all organs. In leaves, preferentially expressed in guard cells.

The protein localises to the membrane. Functionally, glutamate-gated receptor that probably acts as a non-selective cation channel. May be involved in light-signal transduction and calcium homeostasis via the regulation of calcium influx into cells. Required for the long-term calcium oscillation-regulated stomatal movements. The protein is Glutamate receptor 3.1 (GLR3.1) of Arabidopsis thaliana (Mouse-ear cress).